The primary structure comprises 588 residues: MAMVDEPLYPIAVLIDELKNDDIQLRLNSIRRLSTIARALGEERTRKELIPFLSENSDDDDEVLLAMAEELGVFIPFVGGIEFAHVLLPPLESLCTVEETCVREKAVESLCKIGSQMKENDLVESFVPLVKRLAGGEWFAARVSACGIFHVAYQGCTDVLKTELRATYSQLCKDDMPMVRRAAASNLGKFATTVESTFLIAEIMTMFDDLTKDDQDSVRLLAVEGCAALGKLLEPQDCVARILPVIVNFSQDKSWRVRYMVANQLYELCEAVGPDCTRTDLVPAYVRLLRDNEAEVRIAAAGKVTKFCRLLNPELAIQHILPCVKELSSDSSQHVRSALASVIMGMAPILGKDSTIEHLLPIFLSLLKDEFPDVRLNIISKLDQVNQVIGIDLLSQSLLPAIVELAEDRHWRVRLAIIEYVPLLASQLGIGFFDDKLGALCMQWLQDKVYSIREAAANNLKRLAEEFGPEWAMQHLVPQVLDMVNNPHYLHRMMVLRAISLMAPVMGSEITCSKFLPVVVEASKDRVPNIKFNVAKLLQSLIPIVDQSVVDKTIRQCLVDLSEDPDVDVRYFANQALNSIDGSTAAQS.

14 HEAT repeats span residues 2 to 42 (AMVD…ALGE), 44 to 80 (RTRKELIPFLSENSDDDDEVLLAMAEELGVFIPFVGG), 81 to 119 (IEFAHVLLPPLESLCTVEETCVREKAVESLCKIGSQMKE), 158 to 196 (DVLKTELRATYSQLCKDDMPMVRRAAASNLGKFATTVES), 197 to 235 (TFLIAEIMTMFDDLTKDDQDSVRLLAVEGCAALGKLLEP), 236 to 274 (QDCVARILPVIVNFSQDKSWRVRYMVANQLYELCEAVGP), 275 to 313 (DCTRTDLVPAYVRLLRDNEAEVRIAAAGKVTKFCRLLNP), 315 to 352 (LAIQHILPCVKELSSDSSQHVRSALASVIMGMAPILGK), 353 to 391 (DSTIEHLLPIFLSLLKDEFPDVRLNIISKLDQVNQVIGI), 393 to 430 (LLSQSLLPAIVELAEDRHWRVRLAIIEYVPLLASQLGI), 432 to 469 (FFDDKLGALCMQWLQDKVYSIREAAANNLKRLAEEFGP), 470 to 508 (EWAMQHLVPQVLDMVNNPHYLHRMMVLRAISLMAPVMGS), 509 to 547 (EITCSKFLPVVVEASKDRVPNIKFNVAKLLQSLIPIVDQ), and 549 to 586 (VVDKTIRQCLVDLSEDPDVDVRYFANQALNSIDGSTAA).

The protein belongs to the phosphatase 2A regulatory subunit A family. As to quaternary structure, PP2A consists of a common heterodimeric core enzyme, composed of a 36 kDa catalytic subunit (subunit C) and a 65 kDa constant regulatory subunit (subunit A), that associates with a variety of regulatory subunits such as subunits B (the R2/B/PR55/B55, R3/B''/PR72/PR130/PR59 and R5/B'/B56 families) and the regulatory subunits TON2. Interacts with CYP20-1/ROC7. Also interacts with phosphatidic acid (PA), a lipid signaling molecule. Interacts with CHIP. Interacts with SIC/RON3. Ubiquitinated. CHIP-mediated ubiquitination enhances phosphatase activity after an abiotic stress such as low temperature or darkness. As to expression, mostly expressed in cell-dividing tissues such as apical meristems. Ubiquitous, with higher levels in roots and flowers (at protein level).

The protein localises to the cytoplasm. It is found in the cytosol. The protein resides in the nucleus. The A subunit of protein phosphatase 2A serves as a scaffolding molecule to coordinate the assembly of the catalytic subunit and a variable regulatory B subunit. Seems to act as a positive regulator of PP2A catalytic activity. Confers resistance to phosphatase inhibitors such as okadaic acid and cantharidin. Involved during developmental process such as seedling and floral developments, root gravitropism, and stomatal opening regulation. Involved in the regulation of auxin efflux, especially during basipetal (tips to base) auxin transport in roots, and appears to contribute to the perception of auxin efflux inhibitors such as 1-N-naphthylphthalamic acid (NPA) and to semicarbazone I (substituted phenylsemicarbazone of 2-acetylarylcarboxylic acids) (SCB-I). Modulates the magnitude of ethylene response in the hypocotyl and stem, and functions as a general positive transducer of early ABA signaling. The holoenzyme composed of PP2AA1, PP2A4 and B'ZETA or B'ETA acts as a negative regulator of plant innate immunity by controlling BAK1 phosphorylation state and activation in surface-localized immune receptor complexes. This Arabidopsis thaliana (Mouse-ear cress) protein is Serine/threonine-protein phosphatase 2A 65 kDa regulatory subunit A alpha isoform (PP2AA1).